A 61-amino-acid chain; its full sequence is Large ribosomal subunit protein uL30 (61 aa).

This sequence belongs to the universal ribosomal protein uL30 family. In terms of assembly, part of the 50S ribosomal subunit.

The protein is Large ribosomal subunit protein uL30 of Oenococcus oeni (strain ATCC BAA-331 / PSU-1).